The primary structure comprises 356 residues: MDWALILAWGIKILSLFFVILTGVAYYTLAERKFAGFIQDRPGPNRAGPFGIFQPLADGIKFIAKEEIFPKNVSKGMYLLAPTISMTCAIMAWAVIPFGGTLPAPEWLTTLTGVATIDLQIANPDSGVLYMLAISSLSVYGIMIAGWSSNNKYSLLGGVRSTAQMISYELPMGLSIVAIVIMTGSLKLTDISDSQKDMWNILSPPGFVAFFIYVTAMFAETNRLPFDLAEAESELVVGFHTEYGAFKFALFFLAEYMNMITMSCLTTLLFFGGYNVPFQLGAGSEYQAFIGLGFFILKVLFFAFLFIWVRWTLPRFRYDQLMKLGWKKMIPWGLFVVMFASIYTVYWKEGWMKLFI.

The next 8 helical transmembrane spans lie at 4 to 24 (ALIL…LTGV), 79 to 99 (LLAP…IPFG), 127 to 147 (GVLY…IAGW), 166 to 186 (ISYE…TGSL), 198 to 218 (MWNI…TAMF), 251 to 271 (FFLA…LLFF), 289 to 309 (FIGL…FIWV), and 329 to 349 (MIPW…YWKE).

The protein belongs to the complex I subunit 1 family. As to quaternary structure, NDH-1 is composed of 14 different subunits. Subunits NuoA, H, J, K, L, M, N constitute the membrane sector of the complex.

It localises to the cell inner membrane. It carries out the reaction a quinone + NADH + 5 H(+)(in) = a quinol + NAD(+) + 4 H(+)(out). Functionally, NDH-1 shuttles electrons from NADH, via FMN and iron-sulfur (Fe-S) centers, to quinones in the respiratory chain. The immediate electron acceptor for the enzyme in this species is believed to be ubiquinone. Couples the redox reaction to proton translocation (for every two electrons transferred, four hydrogen ions are translocated across the cytoplasmic membrane), and thus conserves the redox energy in a proton gradient. This subunit may bind ubiquinone. The chain is NADH-quinone oxidoreductase subunit H from Leptospira biflexa serovar Patoc (strain Patoc 1 / ATCC 23582 / Paris).